Reading from the N-terminus, the 369-residue chain is Anhydro-N-acetylmuramic acid kinase (369 aa).

Residue 12–19 participates in ATP binding; the sequence is GTSLDGVD.

The protein belongs to the anhydro-N-acetylmuramic acid kinase family.

The enzyme catalyses 1,6-anhydro-N-acetyl-beta-muramate + ATP + H2O = N-acetyl-D-muramate 6-phosphate + ADP + H(+). It functions in the pathway amino-sugar metabolism; 1,6-anhydro-N-acetylmuramate degradation. The protein operates within cell wall biogenesis; peptidoglycan recycling. Functionally, catalyzes the specific phosphorylation of 1,6-anhydro-N-acetylmuramic acid (anhMurNAc) with the simultaneous cleavage of the 1,6-anhydro ring, generating MurNAc-6-P. Is required for the utilization of anhMurNAc either imported from the medium or derived from its own cell wall murein, and thus plays a role in cell wall recycling. The polypeptide is Anhydro-N-acetylmuramic acid kinase (Shigella flexneri serotype 5b (strain 8401)).